We begin with the raw amino-acid sequence, 90 residues long: Putative regulatory protein cce_4590 (90 aa).

It belongs to the RemA family.

The protein is Putative regulatory protein cce_4590 of Crocosphaera subtropica (strain ATCC 51142 / BH68) (Cyanothece sp. (strain ATCC 51142)).